Reading from the N-terminus, the 257-residue chain is Adenosylcobinamide-GDP ribazoletransferase (257 aa).

The next 6 helical transmembrane spans lie at 7 to 27 (QLTL…PTWV), 39 to 59 (RYFG…YEIT), 61 to 81 (GFLP…VVTG), 113 to 133 (IGTY…ILLS), 143 to 163 (VVTA…SLIF), and 196 to 216 (VLVL…GLVL).

The protein belongs to the CobS family. Mg(2+) serves as cofactor.

It is found in the cell inner membrane. It catalyses the reaction alpha-ribazole + adenosylcob(III)inamide-GDP = adenosylcob(III)alamin + GMP + H(+). The enzyme catalyses alpha-ribazole 5'-phosphate + adenosylcob(III)inamide-GDP = adenosylcob(III)alamin 5'-phosphate + GMP + H(+). The protein operates within cofactor biosynthesis; adenosylcobalamin biosynthesis; adenosylcobalamin from cob(II)yrinate a,c-diamide: step 7/7. In terms of biological role, joins adenosylcobinamide-GDP and alpha-ribazole to generate adenosylcobalamin (Ado-cobalamin). Also synthesizes adenosylcobalamin 5'-phosphate from adenosylcobinamide-GDP and alpha-ribazole 5'-phosphate. This chain is Adenosylcobinamide-GDP ribazoletransferase, found in Shewanella woodyi (strain ATCC 51908 / MS32).